A 542-amino-acid chain; its full sequence is MLDILRDNPLLLLFIVAGIGYPLGRVRIGGIHLGVAAVLFVGLAFGALDPSLKLPEIVYQFGLALFVYCVGLSSGHGFLRSFRGKGVIYNLLTLGVILLAAALLLIPHYLLSLRPGETAGVFAGLLTSTPALAAAVEYLTRAGAAGQLSDPVVGYSIAYPASVLGVILAIYLAERCFRIDYRAEARTLKDVPGVSPEITCWTLRVCRPKAFGRTVRDLVAEHRLQVVFGRIRRGDHADVVSWETHLEEGDLVTAVGPVEELERAAQVIGCVSEVQADLDRSEVDMREVFVSNPEVAGRTLRELNLPNRFGAVVSRVWRGDLQLLPYADMPLELGDRVRVLSRRERQQEVAAYLGDSYRAISEIDIAVLGLGMALGIGLGLVPIPLPGGITVRLGLAGGPLIVALFLGARQRTGSLVWVLPYSANMLLRQMGLTIFLAAVGTRSGYEFAQMLTQPRGWAILGASAAIIVLLSWVMLYVGYRWLRIPMGLLTGMVAGMQTQSATLGFALDQAGNDLPTVGYAMVYPMAMVVKIVLAPVIIAVLT.

The next 5 membrane-spanning stretches (helical) occupy residues 4 to 23 (ILRDNPLLLLFIVAGIGYPL), 28 to 47 (IGGIHLGVAAVLFVGLAFGA), 57 to 79 (IVYQFGLALFVYCVGLSSGHGFL), 86 to 108 (GVIYNLLTLGVILLAAALLLIPH), and 151 to 173 (PVVGYSIAYPASVLGVILAIYLA). RCK C-terminal domains are found at residues 186–270 (RTLK…VIGC) and 273–356 (EVQA…LGDS). 6 consecutive transmembrane segments (helical) span residues 365-384 (IAVLGLGMALGIGLGLVPIP), 389-408 (ITVRLGLAGGPLIVALFLGA), 415-437 (LVWVLPYSANMLLRQMGLTIFLA), 457-479 (WAILGASAAIIVLLSWVMLYVGY), 484-506 (IPMGLLTGMVAGMQTQSATLGFA), and 519-541 (YAMVYPMAMVVKIVLAPVIIAVL).

It belongs to the AAE transporter (TC 2.A.81) family.

Its subcellular location is the cell membrane. This is an uncharacterized protein from Symbiobacterium thermophilum (strain DSM 24528 / JCM 14929 / IAM 14863 / T).